The primary structure comprises 25 residues: Caerin-1.19 (25 aa).

Residue Leu-25 is modified to Leucine amide.

This sequence belongs to the frog skin active peptide (FSAP) family. Caerin subfamily. As to expression, expressed by the skin dorsal glands.

The protein localises to the secreted. In terms of biological role, caerin-1.19 shows significant activity against Gram-positive organisms, but is less effective against Gram-negative organisms. The protein is Caerin-1.19 of Ranoidea gracilenta (Dainty green tree frog).